Reading from the N-terminus, the 389-residue chain is Probable inactive purple acid phosphatase 29 (389 aa).

An N-terminal signal peptide occupies residues 1 to 34 (MADNRRRRSLFDFLLFSVFLGLACLCLSPIPATA). An N-linked (GlcNAc...) asparagine glycan is attached at N80. Residue N136 participates in substrate binding. N136 serves as a coordination point for Zn(2+). Residues N191 and N267 are each glycosylated (N-linked (GlcNAc...) asparagine). Zn(2+) is bound at residue H303. 303–305 (HDH) contributes to the substrate binding site. Position 305 (H305) interacts with Fe cation. N380 is a glycosylation site (N-linked (GlcNAc...) asparagine).

Belongs to the metallophosphoesterase superfamily. Purple acid phosphatase family. Homodimer. Requires Fe cation as cofactor. It depends on Zn(2+) as a cofactor. Expressed in roots, stems, leaves, flowers and siliques.

It localises to the secreted. The sequence is that of Probable inactive purple acid phosphatase 29 (PAP29) from Arabidopsis thaliana (Mouse-ear cress).